The primary structure comprises 111 residues: Ig kappa chain V-III region PC 2485/PC 4039 (111 aa).

The interval 1-23 (DIVLTQSPASLAVSLGQRATISC) is framework-1. C23 and C92 are joined by a disulfide. Residues 24–38 (RASKSVSTSGYSYMH) form a complementarity-determining-1 region. The framework-2 stretch occupies residues 39–53 (WYQQKPGQPPKLLIY). Residues 54 to 60 (LASSLES) form a complementarity-determining-2 region. The framework-3 stretch occupies residues 61 to 92 (GVPARFSGSGSGTDFTLNIQPVEEEDAAIYYC). The segment at 93–101 (QHSRELPLT) is complementarity-determining-3. The segment at 102–111 (FGAGTKLELK) is framework-4.

This Mus musculus (Mouse) protein is Ig kappa chain V-III region PC 2485/PC 4039.